A 345-amino-acid chain; its full sequence is Aurora kinase B (345 aa).

A disordered region spans residues 1–25; that stretch reads MAQKENAYPWPYGSKTSQSGLNTLS. Positions 14-25 are enriched in polar residues; the sequence is SKTSQSGLNTLS. Position 35 is a phosphothreonine (T35). Positions 50-77 are disordered; it reads TAAPGQKLAENKSQGSTASQGSQNKQPF. The span at 60–77 shows a compositional bias: polar residues; it reads NKSQGSTASQGSQNKQPF. The residue at position 62 (S62) is a Phosphoserine. One can recognise a Protein kinase domain in the interval 82–332; the sequence is FEIGRPLGKG…LAEVAAHPWV (251 aa). ATP contacts are provided by residues 88–96 and K111; that span reads LGKGKFGNV. D205 (proton acceptor) is an active-site residue. Residue K220 is modified to N6-acetyllysine. A Phosphoserine modification is found at S232. At T237 the chain carries Phosphothreonine; by autocatalysis.

It belongs to the protein kinase superfamily. Ser/Thr protein kinase family. Aurora subfamily. Component of the chromosomal passenger complex (CPC) composed of at least BIRC5/survivin, CDCA8/borealin, INCENP, AURKB or AURKC; predominantly independent AURKB- and AURKC-containing complexes exist. Associates with RACGAP1 during M phase. Interacts with SPDYC; this interaction may be required for proper localization of active, Thr-237-phosphorylated AURKB form during prometaphase and metaphase. Interacts with p53/TP53. Interacts (via the middle kinase domain) with NOC2L (via the N- and C-terminus domains). Interacts with CDCA1. Interacts with EVI5. Interacts with JTB. Interacts with NDC80. Interacts with PSMA3. Interacts with RNF2/RING1B. Interacts with SEPTIN1. Interacts with SIRT2. Interacts with TACC1. Interacts with TTC28. The phosphorylation of Thr-237 requires the binding to INCENP and occurs by means of an autophosphorylation mechanism. Thr-237 phosphorylation is indispensable for the AURKB kinase activity. In terms of processing, acetylated at Lys-220 by KAT5 at kinetochores, increasing AURKB activity and promoting accurate chromosome segregation in mitosis. Post-translationally, ubiquitinated by different BCR (BTB-CUL3-RBX1) E3 ubiquitin ligase complexes. Ubiquitinated by the BCR(KLHL9-KLHL13) E3 ubiquitin ligase complex, ubiquitination leads to removal from mitotic chromosomes and is required for cytokinesis. During anaphase, the BCR(KLHL21) E3 ubiquitin ligase complex recruits the CPC complex from chromosomes to the spindle midzone and mediates the ubiquitination of AURKB. Ubiquitination of AURKB by BCR(KLHL21) E3 ubiquitin ligase complex may not lead to its degradation by the proteasome. Deubiquitinated by USP35; inhibiting CDH1-mediated degradation of AURKB. Expressed in testis, intestine and spleen. All of them are tissues that contain a large number of proliferating cells. Expressed during S phase, in a cell-cycle-dependent fashion.

Its subcellular location is the nucleus. It localises to the chromosome. The protein resides in the centromere. It is found in the kinetochore. The protein localises to the cytoplasm. Its subcellular location is the cytoskeleton. It localises to the spindle. The protein resides in the midbody. The catalysed reaction is L-seryl-[protein] + ATP = O-phospho-L-seryl-[protein] + ADP + H(+). It catalyses the reaction L-threonyl-[protein] + ATP = O-phospho-L-threonyl-[protein] + ADP + H(+). Activity is greatly increased when AURKB is within the CPC complex. In particular, AURKB-phosphorylated INCENP acts as an activator of AURKB. Positive feedback between HASPIN and AURKB contributes to CPC localization. Functionally, serine/threonine-protein kinase component of the chromosomal passenger complex (CPC), a complex that acts as a key regulator of mitosis. The CPC complex has essential functions at the centromere in ensuring correct chromosome alignment and segregation and is required for chromatin-induced microtubule stabilization and spindle assembly. Involved in the bipolar attachment of spindle microtubules to kinetochores and is a key regulator for the onset of cytokinesis during mitosis. Required for central/midzone spindle assembly and cleavage furrow formation. Key component of the cytokinesis checkpoint, a process required to delay abscission to prevent both premature resolution of intercellular chromosome bridges and accumulation of DNA damage: phosphorylates CHMP4C, leading to retain abscission-competent VPS4 (VPS4A and/or VPS4B) at the midbody ring until abscission checkpoint signaling is terminated at late cytokinesis. AURKB phosphorylates the CPC complex subunits BIRC5/survivin, CDCA8/borealin and INCENP. Phosphorylation of INCENP leads to increased AURKB activity. Other known AURKB substrates involved in centromeric functions and mitosis are CENPA, DES/desmin, GPAF, KIF2C, NSUN2, RACGAP1, SEPTIN1, VIM/vimentin, HASPIN, and histone H3. A positive feedback loop involving HASPIN and AURKB contributes to localization of CPC to centromeres. Phosphorylation of VIM controls vimentin filament segregation in cytokinetic process, whereas histone H3 is phosphorylated at 'Ser-10' and 'Ser-28' during mitosis (H3S10ph and H3S28ph, respectively). AURKB is also required for kinetochore localization of BUB1 and SGO1. Phosphorylation of p53/TP53 negatively regulates its transcriptional activity. Key regulator of active promoters in resting B- and T-lymphocytes: acts by mediating phosphorylation of H3S28ph at active promoters in resting B-cells, inhibiting RNF2/RING1B-mediated ubiquitination of histone H2A and enhancing binding and activity of the USP16 deubiquitinase at transcribed genes. Acts as an inhibitor of CGAS during mitosis: catalyzes phosphorylation of the N-terminus of CGAS during the G2-M transition, blocking CGAS liquid phase separation and activation, and thereby preventing CGAS-induced autoimmunity. Phosphorylates KRT5 during anaphase and telophase. Phosphorylates ATXN10 which promotes phosphorylation of ATXN10 by PLK1 and may play a role in the regulation of cytokinesis and stimulating the proteasomal degradation of ATXN10. This is Aurora kinase B (Aurkb) from Mus musculus (Mouse).